Reading from the N-terminus, the 391-residue chain is Putative ABC transporter glucose-binding protein TsgA13 (391 aa).

The N-terminal stretch at M1–C28 is a signal peptide. A disordered region spans residues T24–E71. Residues S42–V59 are compositionally biased toward low complexity.

Belongs to the BMP lipoprotein family. In terms of assembly, the complex is composed of two ATP-binding proteins (TsgD13), two transmembrane proteins (TsgB13 and TsgC13) and a solute-binding protein (TsgA13).

Part of an ABC transporter complex involved in glucose import. The protein is Putative ABC transporter glucose-binding protein TsgA13 (tsgA13) of Haloferax volcanii (strain ATCC 29605 / DSM 3757 / JCM 8879 / NBRC 14742 / NCIMB 2012 / VKM B-1768 / DS2) (Halobacterium volcanii).